Consider the following 201-residue polypeptide: Large ribosomal subunit protein uL4 (201 aa).

The disordered stretch occupies residues 43 to 73 (SRGQKTRAEVTGSGKKPWRQKGTGRARSGSV).

It belongs to the universal ribosomal protein uL4 family. In terms of assembly, part of the 50S ribosomal subunit.

One of the primary rRNA binding proteins, this protein initially binds near the 5'-end of the 23S rRNA. It is important during the early stages of 50S assembly. It makes multiple contacts with different domains of the 23S rRNA in the assembled 50S subunit and ribosome. Its function is as follows. Forms part of the polypeptide exit tunnel. The chain is Large ribosomal subunit protein uL4 from Sodalis glossinidius (strain morsitans).